A 424-amino-acid polypeptide reads, in one-letter code: Kynureninase (424 aa).

Residues Leu105, Ser106, 133-136 (FPTD), Asp218, His221, and Tyr243 contribute to the pyridoxal 5'-phosphate site. Residue Lys244 is modified to N6-(pyridoxal phosphate)lysine. Pyridoxal 5'-phosphate contacts are provided by Trp274 and Asn302.

It belongs to the kynureninase family. Homodimer. Requires pyridoxal 5'-phosphate as cofactor.

It carries out the reaction L-kynurenine + H2O = anthranilate + L-alanine + H(+). The enzyme catalyses 3-hydroxy-L-kynurenine + H2O = 3-hydroxyanthranilate + L-alanine + H(+). Its pathway is amino-acid degradation; L-kynurenine degradation; L-alanine and anthranilate from L-kynurenine: step 1/1. It participates in cofactor biosynthesis; NAD(+) biosynthesis; quinolinate from L-kynurenine: step 2/3. Its function is as follows. Catalyzes the cleavage of L-kynurenine (L-Kyn) and L-3-hydroxykynurenine (L-3OHKyn) into anthranilic acid (AA) and 3-hydroxyanthranilic acid (3-OHAA), respectively. This chain is Kynureninase, found in Stenotrophomonas maltophilia (strain K279a).